Consider the following 360-residue polypeptide: Phospho-N-acetylmuramoyl-pentapeptide-transferase (360 aa).

A run of 10 helical transmembrane segments spans residues 3-23 (SILVGAAVALVVSILFTPYLI), 52-72 (MGGVAILVAMWAGYLVAHLTV), 81-101 (GLLVLGLTTALGIVGFLDDFI), 115-135 (AKLVGQLVASVLFAVLAMQFA), 153-173 (ITVISFGSVGFVIFAYIAISG), 187-207 (LAGGTAAMVLAIYVVISFWQF), 230-250 (IALVAGAAMAACVGFLWWNAA), 254-274 (IFMGDTGSLALGGLLAGLSMV), 282-302 (IIIGGLFVVEALSVVMQIVVF), and 333-353 (FWVLAAISAMFGLGLFYADWL).

The protein belongs to the glycosyltransferase 4 family. MraY subfamily. It depends on Mg(2+) as a cofactor.

Its subcellular location is the cell membrane. The catalysed reaction is UDP-N-acetyl-alpha-D-muramoyl-L-alanyl-gamma-D-glutamyl-meso-2,6-diaminopimeloyl-D-alanyl-D-alanine + di-trans,octa-cis-undecaprenyl phosphate = di-trans,octa-cis-undecaprenyl diphospho-N-acetyl-alpha-D-muramoyl-L-alanyl-D-glutamyl-meso-2,6-diaminopimeloyl-D-alanyl-D-alanine + UMP. The protein operates within cell wall biogenesis; peptidoglycan biosynthesis. Its function is as follows. Catalyzes the initial step of the lipid cycle reactions in the biosynthesis of the cell wall peptidoglycan: transfers peptidoglycan precursor phospho-MurNAc-pentapeptide from UDP-MurNAc-pentapeptide onto the lipid carrier undecaprenyl phosphate, yielding undecaprenyl-pyrophosphoryl-MurNAc-pentapeptide, known as lipid I. The sequence is that of Phospho-N-acetylmuramoyl-pentapeptide-transferase from Saccharopolyspora erythraea (strain ATCC 11635 / DSM 40517 / JCM 4748 / NBRC 13426 / NCIMB 8594 / NRRL 2338).